Reading from the N-terminus, the 236-residue chain is uncharacterized protein (236 aa).

The HTH gntR-type domain occupies 1–69; that stretch reads MLKYQQIATE…RGSGIFVRKH (69 aa). Residues 29 to 48 constitute a DNA-binding region (H-T-H motif); that stretch reads LETLMAQFEVSKSTITKSLE.

This is an uncharacterized protein from Bacillus subtilis (strain 168).